Consider the following 485-residue polypeptide: Adenosylhomocysteinase (485 aa).

Residues threonine 60, aspartate 146, and glutamate 208 each coordinate substrate. 209-211 (TTT) contributes to the NAD(+) binding site. Substrate is bound by residues lysine 238 and aspartate 242. NAD(+) contacts are provided by residues asparagine 243, 272–277 (GYGDVG), glutamate 295, asparagine 330, 351–353 (IGH), and asparagine 399.

It belongs to the adenosylhomocysteinase family. The cofactor is NAD(+).

Its subcellular location is the cytoplasm. The enzyme catalyses S-adenosyl-L-homocysteine + H2O = L-homocysteine + adenosine. The protein operates within amino-acid biosynthesis; L-homocysteine biosynthesis; L-homocysteine from S-adenosyl-L-homocysteine: step 1/1. In terms of biological role, may play a key role in the regulation of the intracellular concentration of adenosylhomocysteine. The protein is Adenosylhomocysteinase of Streptomyces coelicolor (strain ATCC BAA-471 / A3(2) / M145).